The following is a 536-amino-acid chain: REST corepressor 2 (536 aa).

Positions 1–44 (MERSGSGVLSRSRAKTVTNGNSQHSEEESSDEEHPNDSMIRVGG) are disordered. Over residues 24–36 (HSEEESSDEEHPN) the composition is skewed to basic and acidic residues. Positions 38 to 123 (SMIRVGGDYQ…KSLADLANFT (86 aa)) constitute an ELM2 domain. An SANT 1 domain is found at 124–175 (PFPDEWTVEDKVLFEQAFSFHGKSFHRIQQMLPDKMITSLVKYYYSWKKTRT). Positions 179–264 (VMDRQARKLL…RARRRPPKGM (86 aa)) are disordered. Residues 197–211 (NDEIEEGDPGSDSDF) are compositionally biased toward acidic residues. A compositionally biased stretch (basic residues) spans 249 to 262 (YRHHPLRARRRPPK). Residues 283 to 315 (VTIRQLDTQLVSLKRQVQKIKQTNSVLRNNLGD) adopt a coiled-coil conformation. Positions 328 to 379 (KINSRWTTEEQLLAVQAVRRYGKDFAAIADVIGNKTVAQVSSFFVSYRRRFN) constitute an SANT 2 domain. The interval 389–536 (AEQEVQGSSG…GLKVESPQSH (148 aa)) is disordered. Positions 391–406 (QEVQGSSGRTVNTELN) are enriched in polar residues. Residues 422 to 449 (SPPHSDSPLPSSEGSASGNHSSAQSSPP) are compositionally biased toward low complexity. Pro residues predominate over residues 450–476 (LTQPPPLLRPAPPSAPPSLLRQPPPLQ).

Belongs to the CoREST family.

It localises to the nucleus. Its function is as follows. May act as a component of a corepressor complex that represses transcription. In Danio rerio (Zebrafish), this protein is REST corepressor 2 (rcor2).